The chain runs to 356 residues: NADH-quinone oxidoreductase subunit H (356 aa).

8 helical membrane passes run 18–38 (IVMI…IAYI), 87–107 (GVFL…WAVI), 120–140 (VGIL…IMAG), 166–186 (IGFV…SAVV), 205–225 (ILNW…VSAL), 265–285 (AITT…LPPI), 292–312 (WVPG…LIAM), and 333–353 (FLPL…FAGI).

It belongs to the complex I subunit 1 family. NDH-1 is composed of 14 different subunits. Subunits NuoA, H, J, K, L, M, N constitute the membrane sector of the complex.

The protein localises to the cell inner membrane. The catalysed reaction is a quinone + NADH + 5 H(+)(in) = a quinol + NAD(+) + 4 H(+)(out). In terms of biological role, NDH-1 shuttles electrons from NADH, via FMN and iron-sulfur (Fe-S) centers, to quinones in the respiratory chain. The immediate electron acceptor for the enzyme in this species is believed to be ubiquinone. Couples the redox reaction to proton translocation (for every two electrons transferred, four hydrogen ions are translocated across the cytoplasmic membrane), and thus conserves the redox energy in a proton gradient. This subunit may bind ubiquinone. This Bradyrhizobium sp. (strain BTAi1 / ATCC BAA-1182) protein is NADH-quinone oxidoreductase subunit H.